The sequence spans 88 residues: Small ribosomal subunit protein bS20 (88 aa).

Positions 1-20 (MANTKSARKSLIKSKQQRKC) are disordered.

Belongs to the bacterial ribosomal protein bS20 family.

Binds directly to 16S ribosomal RNA. The chain is Small ribosomal subunit protein bS20 from Blochmanniella pennsylvanica (strain BPEN).